The chain runs to 630 residues: DNA mismatch repair protein MutL (630 aa).

The span at 398-408 shows a compositional bias: polar residues; it reads TQTNAFGSMAT. Positions 398 to 425 are disordered; it reads TQTNAFGSMATSRDSSRGSYSASESRQR.

The protein belongs to the DNA mismatch repair MutL/HexB family.

Its function is as follows. This protein is involved in the repair of mismatches in DNA. It is required for dam-dependent methyl-directed DNA mismatch repair. May act as a 'molecular matchmaker', a protein that promotes the formation of a stable complex between two or more DNA-binding proteins in an ATP-dependent manner without itself being part of a final effector complex. The polypeptide is DNA mismatch repair protein MutL (Shewanella baltica (strain OS185)).